A 249-amino-acid chain; its full sequence is GTP cyclohydrolase III (249 aa).

Belongs to the archaeal-type GTP cyclohydrolase family.

The enzyme catalyses GTP + 3 H2O = 2-amino-5-formylamino-6-(5-phospho-D-ribosylamino)pyrimidin-4(3H)-one + 2 phosphate + 2 H(+). In terms of biological role, catalyzes the formation of 2-amino-5-formylamino-6-ribofuranosylamino-4(3H)-pyrimidinone ribonucleotide monophosphate and inorganic phosphate from GTP. Also has an independent pyrophosphate phosphohydrolase activity. This chain is GTP cyclohydrolase III, found in Methanothermobacter thermautotrophicus (strain ATCC 29096 / DSM 1053 / JCM 10044 / NBRC 100330 / Delta H) (Methanobacterium thermoautotrophicum).